The following is a 110-amino-acid chain: MHVKTGDEVLVIAGKDKGRRGKIKRALPAVNRVVVEGINIVKRHQKPRGPGRPGGIIEMEAPLHASNVMLICPSCGRASRTGKRFLEETDHKGRPRKVRYCKACDAVIDK.

The protein belongs to the universal ribosomal protein uL24 family. Part of the 50S ribosomal subunit.

Functionally, one of two assembly initiator proteins, it binds directly to the 5'-end of the 23S rRNA, where it nucleates assembly of the 50S subunit. Its function is as follows. One of the proteins that surrounds the polypeptide exit tunnel on the outside of the subunit. This chain is Large ribosomal subunit protein uL24, found in Chloroflexus aurantiacus (strain ATCC 29366 / DSM 635 / J-10-fl).